Here is a 598-residue protein sequence, read N- to C-terminus: Jacalin-related lectin 17 (598 aa).

The disordered stretch occupies residues 1–23; sequence MAQRLEAEGNKNFKGKSKWDDGS. Jacalin-type lectin domains follow at residues 2-148, 151-293, 295-445, and 452-595; these read AQRL…YVTW, PTKL…YFTT, PFTK…HFCP, and GEKV…HVLP.

Belongs to the jacalin lectin family.

In Arabidopsis thaliana (Mouse-ear cress), this protein is Jacalin-related lectin 17 (JAL17).